Reading from the N-terminus, the 84-residue chain is Large ribosomal subunit protein bL27 (84 aa).

The interval 1-24 is disordered; sequence MAHKKAGGSSRNGRDSKGQRLGCK.

This sequence belongs to the bacterial ribosomal protein bL27 family.

The protein is Large ribosomal subunit protein bL27 of Pelobacter propionicus (strain DSM 2379 / NBRC 103807 / OttBd1).